Reading from the N-terminus, the 405-residue chain is Maintenance of mitochondrial morphology protein 1 (405 aa).

Residues 1–86 are Lumenal-facing; that stretch reads MQVLNFYVNP…TGSTKSFTQG (86 aa). Residues 87–107 traverse the membrane as a helical segment; sequence LIIGQLSVIILLGIFIKFFVF. The Cytoplasmic portion of the chain corresponds to 108 to 405; that stretch reads ADSSTTSSTS…QPVSTTESDH (298 aa). The SMP-LTD domain maps to 166–385; that stretch reads APESLDWFNV…EPRFQVVKLP (220 aa). Positions 303 to 324 are disordered; the sequence is SEPRVAMDSPQSTRDDNSEEPN.

Belongs to the MMM1 family. As to quaternary structure, homodimer. Component of the ER-mitochondria encounter structure (ERMES) or MDM complex, composed of MMM1, MDM10, MDM12 and MDM34. An MMM1 homodimer associates with one molecule of MDM12 on each side in a pairwise head-to-tail manner, and the SMP-LTD domains of MMM1 and MDM12 generate a continuous hydrophobic tunnel for phospholipid trafficking.

Its subcellular location is the endoplasmic reticulum membrane. Component of the ERMES/MDM complex, which serves as a molecular tether to connect the endoplasmic reticulum (ER) and mitochondria. Components of this complex are involved in the control of mitochondrial shape and protein biogenesis, and function in nonvesicular lipid trafficking between the ER and mitochondria. The MDM12-MMM1 subcomplex functions in the major beta-barrel assembly pathway that is responsible for biogenesis of all outer membrane beta-barrel proteins, and acts in a late step after the SAM complex. The MDM10-MDM12-MMM1 subcomplex further acts in the TOM40-specific pathway after the action of the MDM12-MMM1 complex. Essential for establishing and maintaining the structure of mitochondria and maintenance of mtDNA nucleoids. This chain is Maintenance of mitochondrial morphology protein 1, found in Meyerozyma guilliermondii (strain ATCC 6260 / CBS 566 / DSM 6381 / JCM 1539 / NBRC 10279 / NRRL Y-324) (Yeast).